The primary structure comprises 308 residues: Nodulation protein D 1 (308 aa).

The 58-residue stretch at 6–63 (LDLNLLVALDALMTERKLTAAARRINLSQPAMSAAIARLRTYFGDELFSMQGRELIPT) folds into the HTH lysR-type domain. A DNA-binding region (H-T-H motif) is located at residues 23–42 (LTAAARRINLSQPAMSAAIA).

It belongs to the LysR transcriptional regulatory family.

Functionally, nodD regulates the expression of the nodABCFE genes which encode other nodulation proteins. NodD is also a negative regulator of its own expression. Binds flavonoids as inducers. The sequence is that of Nodulation protein D 1 (nodD1) from Rhizobium meliloti (strain 1021) (Ensifer meliloti).